We begin with the raw amino-acid sequence, 503 residues long: Catalase (503 aa).

The signal sequence occupies residues 1–21; sequence MHMSKSFLIISMGFVAVSVQA. Active-site residues include His-72 and Asn-145. Residue Tyr-353 coordinates heme.

The protein belongs to the catalase family. Heme is required as a cofactor.

It is found in the periplasm. The enzyme catalyses 2 H2O2 = O2 + 2 H2O. Decomposes hydrogen peroxide into water and oxygen; serves to protect cells from the toxic effects of hydrogen peroxide. In Vibrio cholerae serotype O1 (strain ATCC 39315 / El Tor Inaba N16961), this protein is Catalase.